An 873-amino-acid chain; its full sequence is Valine--tRNA ligase (873 aa).

The 'HIGH' region motif lies at 43-53; it reads PNVTGVLHMGH. The 'KMSKS' region signature appears at 532–536; the sequence is KMSKS. An ATP-binding site is contributed by Lys535. Residues 802 to 873 adopt a coiled-coil conformation; it reads LGNLINVEEE…IEESIAALTK (72 aa).

The protein belongs to the class-I aminoacyl-tRNA synthetase family. ValS type 1 subfamily. In terms of assembly, monomer.

The protein resides in the cytoplasm. The enzyme catalyses tRNA(Val) + L-valine + ATP = L-valyl-tRNA(Val) + AMP + diphosphate. Functionally, catalyzes the attachment of valine to tRNA(Val). As ValRS can inadvertently accommodate and process structurally similar amino acids such as threonine, to avoid such errors, it has a 'posttransfer' editing activity that hydrolyzes mischarged Thr-tRNA(Val) in a tRNA-dependent manner. This is Valine--tRNA ligase from Parabacteroides distasonis (strain ATCC 8503 / DSM 20701 / CIP 104284 / JCM 5825 / NCTC 11152).